The sequence spans 416 residues: uncharacterized protein (416 aa).

Helical transmembrane passes span 5 to 25, 84 to 104, 128 to 148, 160 to 180, 192 to 212, 237 to 257, 263 to 283, 288 to 308, and 312 to 332; these read LFLI…ILSL, ISGL…LKHV, AYVP…LFSI, LAFL…YLLW, VLLF…KFGF, PIYF…PVFL, FDKR…FYSL, LHHY…FYLT, and IKYA…GVYI.

It belongs to the glycosyltransferase 83 family.

The protein localises to the cell membrane. This is an uncharacterized protein from Aquifex aeolicus (strain VF5).